The sequence spans 275 residues: Penicillin-insensitive murein endopeptidase (275 aa).

The N-terminal stretch at 1-19 is a signal peptide; that stretch reads MKNWIVGMVALVTMVPVMA. 3 disulfide bridges follow: cysteine 44/cysteine 264, cysteine 187/cysteine 235, and cysteine 216/cysteine 223. 5 residues coordinate Zn(2+): histidine 110, histidine 113, aspartate 120, aspartate 147, and histidine 211. Residues 227-262 form a disordered region; the sequence is DTPPPGDGCGAELESWFQPPPPSAKPGKTLPPPLPP. A compositionally biased stretch (pro residues) spans 244–262; the sequence is QPPPPSAKPGKTLPPPLPP.

Belongs to the peptidase M74 family. Dimer. Requires Zn(2+) as cofactor.

The protein resides in the periplasm. In terms of biological role, murein endopeptidase that cleaves the D-alanyl-meso-2,6-diamino-pimelyl amide bond that connects peptidoglycan strands. Likely plays a role in the removal of murein from the sacculus. This Yersinia pestis bv. Antiqua (strain Antiqua) protein is Penicillin-insensitive murein endopeptidase.